The sequence spans 301 residues: Heterogeneous nuclear ribonucleoprotein D-like (301 aa).

The segment at 1–29 (MEDATEMSGGAEEFAEGSKINASKNQQDD) is disordered. RRM domains follow at residues 30-112 (GKMF…KGKE) and 115-194 (KKVF…QPKE). Disordered stretches follow at residues 194 to 230 (EVYR…NWNQ) and 269 to 301 (GYGP…YQPY). A compositionally biased stretch (gly residues) spans 212–224 (GGRGGGRGRGRGQ).

It is found in the nucleus. The protein resides in the cytoplasm. Functionally, acts as a transcriptional regulator. Binds DNA and RNA. This is Heterogeneous nuclear ribonucleoprotein D-like (HNRNPDL) from Gallus gallus (Chicken).